Reading from the N-terminus, the 483-residue chain is Serine/threonine-protein kinase BSK4 (483 aa).

Gly-2 carries N-myristoyl glycine lipidation. The Protein kinase domain maps to Glu-56–Met-322. ATP-binding positions include His-62–Val-70 and Lys-84. The active-site Proton acceptor is Asp-178.

The protein belongs to the protein kinase superfamily. Ser/Thr protein kinase family.

The protein localises to the cell membrane. The catalysed reaction is L-seryl-[protein] + ATP = O-phospho-L-seryl-[protein] + ADP + H(+). It catalyses the reaction L-threonyl-[protein] + ATP = O-phospho-L-threonyl-[protein] + ADP + H(+). In terms of biological role, probable serine/threonine kinase that acts as a positive regulator of brassinosteroid (BR) signaling downstream of the receptor kinase BRI1. Functions redundantly with BSK3, BSK6, BSK7 and BSK8. The protein is Serine/threonine-protein kinase BSK4 of Arabidopsis thaliana (Mouse-ear cress).